The primary structure comprises 649 residues: Protein mitoshell (649 aa).

A compositionally biased stretch (basic and acidic residues) spans 167-176 (LRSEARKPRP). Disordered regions lie at residues 167-193 (LRSE…ESGA), 389-414 (HGPS…EPTS), and 485-512 (ALPS…VRSY). Over residues 177-191 (ESVVPEESSISSLES) the composition is skewed to low complexity. Polar residues-rich tracts occupy residues 393–414 (AFST…EPTS) and 485–503 (ALPS…SPQS).

Required for male meiotic cytokinesis through its involvement in the regulation of mitochondrial aggregation and fusion, astral spindle assembly and contractile ring formation. The polypeptide is Protein mitoshell (Drosophila melanogaster (Fruit fly)).